Consider the following 478-residue polypeptide: Glutamyl-tRNA reductase (478 aa).

Residues 49–52 (TCNR), S109, 114–116 (EQQ), and Q120 each bind substrate. The active-site Nucleophile is C50. 191 to 196 (GAGSMG) lines the NADP(+) pocket.

This sequence belongs to the glutamyl-tRNA reductase family. As to quaternary structure, homodimer.

The catalysed reaction is (S)-4-amino-5-oxopentanoate + tRNA(Glu) + NADP(+) = L-glutamyl-tRNA(Glu) + NADPH + H(+). It functions in the pathway porphyrin-containing compound metabolism; protoporphyrin-IX biosynthesis; 5-aminolevulinate from L-glutamyl-tRNA(Glu): step 1/2. In terms of biological role, catalyzes the NADPH-dependent reduction of glutamyl-tRNA(Glu) to glutamate 1-semialdehyde (GSA). In Rhodococcus opacus (strain B4), this protein is Glutamyl-tRNA reductase.